A 116-amino-acid chain; its full sequence is Large ribosomal subunit protein uL22 (116 aa).

This sequence belongs to the universal ribosomal protein uL22 family. As to quaternary structure, part of the 50S ribosomal subunit.

Its function is as follows. This protein binds specifically to 23S rRNA; its binding is stimulated by other ribosomal proteins, e.g. L4, L17, and L20. It is important during the early stages of 50S assembly. It makes multiple contacts with different domains of the 23S rRNA in the assembled 50S subunit and ribosome. Functionally, the globular domain of the protein is located near the polypeptide exit tunnel on the outside of the subunit, while an extended beta-hairpin is found that lines the wall of the exit tunnel in the center of the 70S ribosome. This chain is Large ribosomal subunit protein uL22, found in Gloeobacter violaceus (strain ATCC 29082 / PCC 7421).